A 244-amino-acid polypeptide reads, in one-letter code: Mitochondrial import inner membrane translocase subunit Tim21 (244 aa).

Residues 1 to 18 (MICAFLRVVQHAEKLHGS) constitute a mitochondrion transit peptide. The segment at 65–96 (TQGPDPRKAKEDSTKQVSIRRNQREETGVSMS) is disordered. Residues 69–78 (DPRKAKEDST) show a composition bias toward basic and acidic residues. A helical membrane pass occupies residues 107–127 (SYLIVVLFGVGLTGGLLYAIF).

It belongs to the TIM21 family. Component of the TIM23 complex. Component of the MITRAC (mitochondrial translation regulation assembly intermediate of cytochrome c oxidase complex) complex, the core components of this complex being COA3/MITRAC12 and COX14. Interacts with COA3 and MT-CO1/COX1.

It localises to the mitochondrion membrane. Participates in the translocation of transit peptide-containing proteins across the mitochondrial inner membrane. Also required for assembly of mitochondrial respiratory chain complex I and complex IV as component of the MITRAC (mitochondrial translation regulation assembly intermediate of cytochrome c oxidase complex) complex. Probably shuttles between the presequence translocase and respiratory-chain assembly intermediates in a process that promotes incorporation of early nuclear-encoded subunits into these complexes. This is Mitochondrial import inner membrane translocase subunit Tim21 (Timm21) from Mus musculus (Mouse).